Consider the following 82-residue polypeptide: MNRKLLLVTLMVTMLVMQPAEAGVWDWIKKTAGKIWNSEPVKALKSQALNAAKNFVAEKIGATPSEAGQMPFDEFMDILYES.

The N-terminal stretch at 1 to 22 (MNRKLLLVTLMVTMLVMQPAEA) is a signal peptide. Positions 66–82 (EAGQMPFDEFMDILYES) are excised as a propeptide.

Belongs to the non-disulfide-bridged peptide (NDBP) superfamily. Long chain multifunctional peptide (group 2) family. In terms of tissue distribution, expressed by the venom gland.

Its subcellular location is the secreted. It localises to the target cell membrane. Antimicrobial peptide with moderate activity against Gram-positive bacteria and Gram-negative bacteria, as well as low activity against fungi. Acts by inducing bacterial membrane disruption. Shows activity against B.subtilis (MIC=4 ug/ml), S.epidermidis (MIC=64 ug/ml), S.aureus (MIC=32 ug/ml), E.coli (MIC=128 ug/ml), K.pneumoniae (MIC=64 ug/ml), P.aeruginosa (MIC=64 ug/ml), and C.albicans (MIC=128 ug/ml). Does not show hemolysis activity. This is Antimicrobial peptide Smp43 from Scorpio palmatus (Israeli golden scorpion).